Reading from the N-terminus, the 88-residue chain is Small ribosomal subunit protein uS15 (88 aa).

It belongs to the universal ribosomal protein uS15 family. As to quaternary structure, part of the 30S ribosomal subunit. Forms a bridge to the 50S subunit in the 70S ribosome, contacting the 23S rRNA.

One of the primary rRNA binding proteins, it binds directly to 16S rRNA where it helps nucleate assembly of the platform of the 30S subunit by binding and bridging several RNA helices of the 16S rRNA. In terms of biological role, forms an intersubunit bridge (bridge B4) with the 23S rRNA of the 50S subunit in the ribosome. The chain is Small ribosomal subunit protein uS15 from Polaromonas naphthalenivorans (strain CJ2).